The sequence spans 277 residues: ATP synthase subunit delta (277 aa).

The protein belongs to the ATPase delta chain family. In terms of assembly, F-type ATPases have 2 components, F(1) - the catalytic core - and F(0) - the membrane proton channel. F(1) has five subunits: alpha(3), beta(3), gamma(1), delta(1), epsilon(1). F(0) has three main subunits: a(1), b(2) and c(10-14). The alpha and beta chains form an alternating ring which encloses part of the gamma chain. F(1) is attached to F(0) by a central stalk formed by the gamma and epsilon chains, while a peripheral stalk is formed by the delta and b chains.

Its subcellular location is the cell membrane. Its function is as follows. F(1)F(0) ATP synthase produces ATP from ADP in the presence of a proton or sodium gradient. F-type ATPases consist of two structural domains, F(1) containing the extramembraneous catalytic core and F(0) containing the membrane proton channel, linked together by a central stalk and a peripheral stalk. During catalysis, ATP synthesis in the catalytic domain of F(1) is coupled via a rotary mechanism of the central stalk subunits to proton translocation. Functionally, this protein is part of the stalk that links CF(0) to CF(1). It either transmits conformational changes from CF(0) to CF(1) or is implicated in proton conduction. This chain is ATP synthase subunit delta, found in Bifidobacterium animalis subsp. lactis (strain AD011).